Reading from the N-terminus, the 459-residue chain is Proton-coupled folate transporter (459 aa).

At methionine 1 the chain carries N-acetylmethionine. Residues 1–25 (MEGRVSPVGSSHRLLTAAVLFRGPV) are Cytoplasmic-facing. Residue serine 6 is modified to Phosphoserine. The chain crosses the membrane as a helical span at residues 26–44 (EPLVFLANFALVLQGPLTT). Residues 45–82 (QYIWHRISTELGYNGTRHRENCGNQSADPVLKEVETLT) lie on the Extracellular side of the membrane. N-linked (GlcNAc...) asparagine glycosylation is found at asparagine 58 and asparagine 68. Cysteine 66 and cysteine 298 are disulfide-bonded. Residues 83–108 (SHWTLYMNVGGFLVGLFWSTLLGAWS) traverse the membrane as a helical segment. Residues 109–112 (DRVG) are Cytoplasmic-facing. A helical transmembrane segment spans residues 113 to 135 (RRPLLVLASLGLLLQAVVSIFVV). At 136–140 (QLQLH) the chain is on the extracellular side. The helical transmembrane segment at 141-154 (IGFFVLGRALCALL) threads the bilayer. Residues 155 to 177 (GDFNGLLAASFASVADVSSNHSR) are Cytoplasmic-facing. Aspartate 156 and glutamate 185 together coordinate H(+). Residues 178 to 203 (TFRMALLEACIGVAGTLASLLGGHWL) traverse the membrane as a helical segment. Over 204 to 208 (RAQGY) the chain is Extracellular. A helical transmembrane segment spans residues 209 to 227 (ANPFWLALAVLIVMTLYAA). The Cytoplasmic segment spans residues 228–266 (FCFGETVKEPKSTRLFTLRHHRSIVQLYVVPAPEKSRMH). A helical membrane pass occupies residues 267–289 (LALYSLAIFVVVTVHFGAQDILT). H(+) is bound at residue histidine 281. Topologically, residues 290 to 302 (LYELSTPLCWDSK) are extracellular. The chain crosses the membrane as a helical span at residues 303 to 325 (LIGYGSAAQHLPYLTSLLGLRLL). The Cytoplasmic portion of the chain corresponds to 326 to 331 (QFCLAD). A helical membrane pass occupies residues 332-351 (TWVAEIGLAFNILGMVVFAF). The Extracellular segment spans residues 352 to 355 (ATIT). A helical membrane pass occupies residues 356-376 (PLMFTGYGLLFLSLVTTPVIR). At 377 to 388 (AKLSKLVSESEQ) the chain is on the cytoplasmic side. The chain crosses the membrane as a helical span at residues 389–414 (GALFSAVACVNSLAMLMASGIFNSLY). At 415-422 (PATLNFMK) the chain is on the extracellular side. The chain crosses the membrane as a helical span at residues 423–441 (GFPFLLGAGLLFIPAILIG). Topologically, residues 442-459 (VLEKVNPHPEFQQFPQNS) are cytoplasmic.

The protein belongs to the major facilitator superfamily. SLC46A family. In terms of assembly, monomer. Expressed almost exclusively in the small intestine: expressed at high level in the upper half of the small intestine (duodenum and jejunum), expression decreases downwardly in the subsequent quarter and is undetectable in the last quarter (the lowest ileum). Expressed at low level in other tissues, including liver.

The protein localises to the cell membrane. The protein resides in the apical cell membrane. It localises to the basolateral cell membrane. Its subcellular location is the endosome membrane. It is found in the cytoplasm. The catalysed reaction is folate(in) + H(+)(in) = folate(out) + H(+)(out). The enzyme catalyses (6S)-5-methyl-5,6,7,8-tetrahydrofolate(in) + H(+)(in) = (6S)-5-methyl-5,6,7,8-tetrahydrofolate(out) + H(+)(out). It catalyses the reaction methotrexate(in) + H(+)(in) = methotrexate(out) + H(+)(out). It carries out the reaction pemetrexed(in) + H(+)(in) = pemetrexed(out) + H(+)(out). Its activity is regulated as follows. In contrast to human ortholog, not inhibited by myricetin. In terms of biological role, proton-coupled folate symporter that mediates folate absorption using an H(+) gradient as a driving force. Involved in the intestinal absorption of folates at the brush-border membrane of the proximal jejunum, and the transport from blood to cerebrospinal fluid across the choroid plexus. Functions at acidic pH via alternate outward- and inward-open conformation states. Protonation of residues in the outward open state primes the protein for transport. Binding of folate promotes breaking of salt bridge network and subsequent closure of the extracellular gate, leading to the inward-open state and release of protons and folate. Also able to transport antifolate drugs, such as methotrexate and pemetrexed. Involved in FOLR1-mediated endocytosis by serving as a route of export of folates from acidified endosomes. Also acts as a lower-affinity, pH-independent heme carrier protein and constitutes the main importer of heme in the intestine. Imports heme in the retina and retinal pigment epithelium, in neurons of the hippocampus, in hepatocytes and in the renal epithelial cells. Hence, participates in the trafficking of heme and increases intracellular iron content. The sequence is that of Proton-coupled folate transporter from Rattus norvegicus (Rat).